Reading from the N-terminus, the 123-residue chain is Cytochrome b-c1 complex subunit 7 (123 aa).

Belongs to the UQCRB/QCR7 family. As to quaternary structure, component of the ubiquinol-cytochrome c oxidoreductase (cytochrome b-c1 complex, complex III, CIII), a multisubunit enzyme composed of 3 respiratory subunits cytochrome b, cytochrome c1 and Rieske protein, 2 core protein subunits, and additional low-molecular weight protein subunits. The complex exists as an obligatory dimer and forms supercomplexes (SCs) in the inner mitochondrial membrane with cytochrome c oxidase (complex IV, CIV). In terms of processing, the N-terminus is blocked.

The protein resides in the mitochondrion inner membrane. Functionally, component of the ubiquinol-cytochrome c oxidoreductase, a multisubunit transmembrane complex that is part of the mitochondrial electron transport chain which drives oxidative phosphorylation. The respiratory chain contains 3 multisubunit complexes succinate dehydrogenase (complex II, CII), ubiquinol-cytochrome c oxidoreductase (cytochrome b-c1 complex, complex III, CIII) and cytochrome c oxidase (complex IV, CIV), that cooperate to transfer electrons derived from NADH and succinate to molecular oxygen, creating an electrochemical gradient over the inner membrane that drives transmembrane transport and the ATP synthase. The cytochrome b-c1 complex catalyzes electron transfer from ubiquinol to cytochrome c, linking this redox reaction to translocation of protons across the mitochondrial inner membrane, with protons being carried across the membrane as hydrogens on the quinol. In the process called Q cycle, 2 protons are consumed from the matrix, 4 protons are released into the intermembrane space and 2 electrons are passed to cytochrome c. The protein is Cytochrome b-c1 complex subunit 7 of Solanum tuberosum (Potato).